We begin with the raw amino-acid sequence, 211 residues long: 3-demethoxyubiquinol 3-hydroxylase (211 aa).

Residues Glu60, Glu90, His93, Glu142, Glu174, and His177 each contribute to the Fe cation site.

Belongs to the COQ7 family. Requires Fe cation as cofactor.

It is found in the cell membrane. The enzyme catalyses a 5-methoxy-2-methyl-3-(all-trans-polyprenyl)benzene-1,4-diol + AH2 + O2 = a 3-demethylubiquinol + A + H2O. Its pathway is cofactor biosynthesis; ubiquinone biosynthesis. Catalyzes the hydroxylation of 2-nonaprenyl-3-methyl-6-methoxy-1,4-benzoquinol during ubiquinone biosynthesis. This chain is 3-demethoxyubiquinol 3-hydroxylase, found in Herminiimonas arsenicoxydans.